Here is a 511-residue protein sequence, read N- to C-terminus: Ribose import ATP-binding protein RbsA (511 aa).

ABC transporter domains follow at residues 13–249 (VSMD…VGRA) and 260–503 (ALGE…AGIA). 45 to 52 (GENGAGKS) is a binding site for ATP.

Belongs to the ABC transporter superfamily. Ribose importer (TC 3.A.1.2.1) family. As to quaternary structure, the complex is composed of an ATP-binding protein (RbsA), two transmembrane proteins (RbsC) and a solute-binding protein (RbsB).

It localises to the cell inner membrane. The enzyme catalyses D-ribose(out) + ATP + H2O = D-ribose(in) + ADP + phosphate + H(+). Its function is as follows. Part of the ABC transporter complex RbsABC involved in ribose import. Responsible for energy coupling to the transport system. The protein is Ribose import ATP-binding protein RbsA of Roseobacter denitrificans (strain ATCC 33942 / OCh 114) (Erythrobacter sp. (strain OCh 114)).